Consider the following 457-residue polypeptide: Probable xyloglucan 6-xylosyltransferase 5 (457 aa).

The tract at residues 1-40 (MGQDGSPAHKRPSGSGGGLPTTTLTNGGGRGGRGGLLPRG) is disordered. Residues 1–51 (MGQDGSPAHKRPSGSGGGLPTTTLTNGGGRGGRGGLLPRGRQMQKTFNNIK) are Cytoplasmic-facing. The span at 26–37 (NGGGRGGRGGLL) shows a compositional bias: gly residues. Residues 52–72 (ITILCGFVTILVLRGTIGVGN) traverse the membrane as a helical; Signal-anchor for type II membrane protein segment. The Lumenal portion of the chain corresponds to 73-457 (LGSSSADAVN…RTPVETKPQN (385 aa)). The tract at residues 97 to 116 (RSDSDPTDLDEPQEGDMNPN) is disordered. Positions 101 to 110 (DPTDLDEPQE) are enriched in acidic residues. N-linked (GlcNAc...) asparagine glycans are attached at residues Asn-116 and Asn-432.

It belongs to the glycosyltransferase 34 family. Interacts with XXT2 and CSLC4. Interacts with FUT1 and XLT2. In terms of tissue distribution, highly expressed in roots, stems and cauline leaves, and at lower levels in rosette leaves, flowers and siliques.

Its subcellular location is the golgi apparatus membrane. It catalyses the reaction Transfers an alpha-D-xylosyl residue from UDP-D-xylose to a glucose residue in xyloglucan, forming an alpha-(1-&gt;6)-D-xylosyl-D-glucose linkage.. Functionally, probable xyloglucan xylosyltransferase involved in the biosynthesis of xyloglucan in roots. May act in association with XXT1 and XXT2. Associates with other xyloglucan-synthesizing enzymes to form multiprotein complexes for xyloglucan synthesis in the Golgi. The chain is Probable xyloglucan 6-xylosyltransferase 5 from Arabidopsis thaliana (Mouse-ear cress).